An 850-amino-acid chain; its full sequence is Transcription initiation factor TFIID subunit 4B (850 aa).

Residues 99–240 (GTTTIQLPAN…TPSNDARLKA (142 aa)) form a sufficient for interaction with ZNF628 region. The TAFH domain maps to 256-353 (ENVKKCKNFL…VKEVSGDVVI (98 aa)). Positions 504–526 (PSTLLPQAAGIPQTAKVKQLVVQ) are required for interaction with P65/RELA. The Nuclear export signal motif lies at 509-549 (PQAAGIPQTAKVKQLVVQQPSGSSVNHVTSISHSSPLSTQN). Serine 584 carries the phosphoserine modification. The Histone-fold domain maps to 642-691 (PFLVIGALQKRILDIGKKHDITELNSDAVNLISHATQERLRGLLEKLTTI). The disordered stretch occupies residues 788-812 (KRPLESGNESFKDNPSTSGTSSLTA). Residues 794–812 (GNESFKDNPSTSGTSSLTA) are compositionally biased toward polar residues. The interval 818 to 850 (PRITRICLRDLIFCMEQEREMKYSRALYLALLK) is required for interaction with TAF12.

It belongs to the TAF4 family. As to quaternary structure, TFIID is composed of TATA binding protein (TBP) and a number of TBP-associated factors (TAFs). Heterodimerizes with TAF12/TFII20 via the C-terminal H2A-like histone-fold domain. This heterodimer forms a histone-like octamer with the TAF6/TAFII70-TAF9/TAFII31 heterodimer. Interacts with P65/RELA homodimers and P65/RELA-REL heterodimers. Interaction with POU2AF1, via its C-terminal activation domain, is required for octamer-dependent transcription. Interacts with ZNF628. Highly expressed in the testes and ovary, whereas lower levels are detected in most other tissues.

The protein resides in the nucleus. It localises to the cytoplasm. Functionally, cell type-specific subunit of the general transcription factor TFIID that may function as a gene-selective coactivator in certain cells. TFIID is a multimeric protein complex that plays a central role in mediating promoter responses to various activators asond repressors. TAF4B is a transcriptional coactivator of the p65/RELA NF-kappa-B subunit. Involved in the activation of a subset of antiapoptotic genes including TNFAIP3. Through interaction with OCBA/POU2AF1, acts as a coactivator of B-cell-specific transcription. Plays a role in spermiogenesis and oogenesis. This is Transcription initiation factor TFIID subunit 4B (Taf4b) from Mus musculus (Mouse).